Reading from the N-terminus, the 784-residue chain is Toll-like receptor 2 (784 aa).

An N-terminal signal peptide occupies residues 1–20 (MPRALWTAWVWAVISVFTEG). The Extracellular segment spans residues 21–587 (ASDQASSLSC…ARLSLSECHR (567 aa)). A disulfide bridge links Cys-30 with Cys-36. 19 LRR repeats span residues 54–77 (VKSL…RCVN), 78–101 (LKTL…HLRN), 102–125 (LEYL…SLYV), 126–150 (LKFL…HLPN), 151–175 (LRTL…GLTF), 176–199 (LEEL…SIQN), 200–223 (ISHL…IVSS), 224–250 (LDYL…INTS), 251–278 (VKKL…YVSG), 279–308 (ILEV…YLGN), 309–337 (VETL…LTGK), 338–361 (VKRV…HLKS), 362–388 (LEYL…AWPV), 389–414 (LQTL…TLKN), 415–437 (LNNL…WPGK), 438–457 (MKQL…CLPQ), 458–478 (TLEI…ILPQ), 479–500 (LKEL…FLPV), and 501–524 (LSVM…SFPQ). Asn-114 carries an N-linked (GlcNAc...) asparagine glycan. A glycan (N-linked (GlcNAc...) asparagine) is linked at Asn-199. N-linked (GlcNAc...) asparagine glycosylation is present at Asn-248. A disulfide bond links Cys-353 and Cys-382. The cysteines at positions 432 and 454 are disulfide-linked. Asn-442 is a glycosylation site (N-linked (GlcNAc...) asparagine). In terms of domain architecture, LRRCT spans 525–579 (LKALEAGGNNFICSCDFLSFAQGQQALARVLVDWPDGYRCDAPSHVRGQRVQDAR). Residues 588-608 (AAVVSAVCCALFLLLLLTGVL) form a helical membrane-spanning segment. The Cytoplasmic portion of the chain corresponds to 609–784 (CHRFHGLWYM…WLNLRAAIRS (176 aa)). A TIR domain is found at 639–782 (LCYDAFVSYS…AFWLNLRAAI (144 aa)). A Glycyl lysine isopeptide (Lys-Gly) (interchain with G-Cter in ubiquitin) cross-link involves residue Lys-754. The ATG16L1-binding motif motif lies at 761 to 778 (YLEWPTDETHREAFWLNL).

The protein belongs to the Toll-like receptor family. As to quaternary structure, interacts with LY96, TLR1 and TLR6 (via extracellular domain). TLR2 seems to exist in heterodimers with either TLR1 or TLR6 before stimulation by the ligand. The heterodimers form bigger oligomers in response to their corresponding ligands as well as further heterotypic associations with other receptors such as CD14 and/or CD36. Binds MYD88 (via TIR domain). Interacts with TICAM1. Interacts with CNPY3. Interacts with ATG16L1. Interacts with PPP1R11. Interacts with TICAM2. Interacts with TIRAP. In terms of processing, ubiquitinated at Lys-754 by PPP1R11, leading to its degradation. Deubiquitinated by USP2. Glycosylation of Asn-442 is critical for secretion of the N-terminal ectodomain of TLR2.

It is found in the membrane. It localises to the cytoplasmic vesicle. Its subcellular location is the phagosome membrane. The protein localises to the membrane raft. Functionally, cooperates with LY96 to mediate the innate immune response to bacterial lipoproteins and other microbial cell wall components. Cooperates with TLR1 or TLR6 to mediate the innate immune response to bacterial lipoproteins or lipopeptides. Acts via MYD88 and TRAF6, leading to NF-kappa-B activation, cytokine secretion and the inflammatory response. May also promote apoptosis in response to lipoproteins. Forms activation clusters composed of several receptors depending on the ligand, these clusters trigger signaling from the cell surface and subsequently are targeted to the Golgi in a lipid-raft dependent pathway. Forms the cluster TLR2:TLR6:CD14:CD36 in response to diacylated lipopeptides and TLR2:TLR1:CD14 in response to triacylated lipopeptides. This Ovis aries (Sheep) protein is Toll-like receptor 2 (TLR2).